A 65-amino-acid chain; its full sequence is Metallothionein-3 (65 aa).

The residue at position 1 (methionine 1) is an N-acetylmethionine. Residues 1–30 are beta; sequence MDPEACPCPTGGSCTCSDSCKCEGCTCASS. The a divalent metal cation site is built by cysteine 6, cysteine 8, cysteine 14, cysteine 16, cysteine 20, cysteine 22, cysteine 25, and cysteine 27. Positions 31–65 are alpha; the sequence is KKSCCPAECEKCAKDCVCKGGEGAEAEEKKCGCCQ. Serine 33 is modified (phosphoserine). A divalent metal cation is bound by residues cysteine 34, cysteine 35, cysteine 39, cysteine 42, cysteine 46, cysteine 48, cysteine 61, cysteine 63, and cysteine 64.

This sequence belongs to the metallothionein superfamily. Type 1 family.

In terms of biological role, binds heavy metals. Contains five zinc and one copper atoms per polypeptide chain and only a negligible amount of cadmium. This Ovis aries (Sheep) protein is Metallothionein-3 (MT3).